The chain runs to 103 residues: Acylphosphatase-2 (103 aa).

N-acetylserine is present on Ser-2. The Acylphosphatase-like domain occupies 13 to 103 (SVDYEVFGRV…LDFSGFSTRY (91 aa)). Cys-26 carries the S-glutathionyl cysteine; alternate modification. Active-site residues include Arg-28 and Asn-46.

This sequence belongs to the acylphosphatase family. In terms of assembly, monomer (TU1) or homodimer (TU3) in absence of reducing factors; disulfide linked.

It carries out the reaction an acyl phosphate + H2O = a carboxylate + phosphate + H(+). Its physiological role is not yet clear. The sequence is that of Acylphosphatase-2 (ACYP2) from Meleagris gallopavo (Wild turkey).